The primary structure comprises 1097 residues: DNA-directed RNA polymerase subunit beta (1097 aa).

The disordered stretch occupies residues 1072 to 1097; the sequence is QDINPRRNTPSRPTYESLGTSEYEED. The span at 1077-1091 shows a compositional bias: polar residues; it reads RRNTPSRPTYESLGT.

This sequence belongs to the RNA polymerase beta chain family. In terms of assembly, in cyanobacteria the RNAP catalytic core is composed of 2 alpha, 1 beta, 1 beta', 1 gamma and 1 omega subunit. When a sigma factor is associated with the core the holoenzyme is formed, which can initiate transcription.

The enzyme catalyses RNA(n) + a ribonucleoside 5'-triphosphate = RNA(n+1) + diphosphate. Functionally, DNA-dependent RNA polymerase catalyzes the transcription of DNA into RNA using the four ribonucleoside triphosphates as substrates. The polypeptide is DNA-directed RNA polymerase subunit beta (Prochlorococcus marinus (strain MIT 9215)).